The sequence spans 98 residues: Feather keratin (98 aa).

An N-acetylalanine modification is found at Ala1.

It belongs to the avian keratin family. The avian keratins (F-ker, S-ker, C-ker and B-ker) are a complex mixture of very similar polypeptides.

The polypeptide is Feather keratin (Chroicocephalus novaehollandiae (Silver gull)).